A 493-amino-acid polypeptide reads, in one-letter code: Aspartyl/glutamyl-tRNA(Asn/Gln) amidotransferase subunit B (493 aa).

The disordered stretch occupies residues 268-291 (HYQEADGSTSKGRPKETAEDYRYF). Basic and acidic residues predominate over residues 280 to 291 (RPKETAEDYRYF).

This sequence belongs to the GatB/GatE family. GatB subfamily. In terms of assembly, heterotrimer of A, B and C subunits.

The enzyme catalyses L-glutamyl-tRNA(Gln) + L-glutamine + ATP + H2O = L-glutaminyl-tRNA(Gln) + L-glutamate + ADP + phosphate + H(+). It carries out the reaction L-aspartyl-tRNA(Asn) + L-glutamine + ATP + H2O = L-asparaginyl-tRNA(Asn) + L-glutamate + ADP + phosphate + 2 H(+). Its function is as follows. Allows the formation of correctly charged Asn-tRNA(Asn) or Gln-tRNA(Gln) through the transamidation of misacylated Asp-tRNA(Asn) or Glu-tRNA(Gln) in organisms which lack either or both of asparaginyl-tRNA or glutaminyl-tRNA synthetases. The reaction takes place in the presence of glutamine and ATP through an activated phospho-Asp-tRNA(Asn) or phospho-Glu-tRNA(Gln). The protein is Aspartyl/glutamyl-tRNA(Asn/Gln) amidotransferase subunit B of Corynebacterium glutamicum (strain ATCC 13032 / DSM 20300 / JCM 1318 / BCRC 11384 / CCUG 27702 / LMG 3730 / NBRC 12168 / NCIMB 10025 / NRRL B-2784 / 534).